The following is a 394-amino-acid chain: Ketoisovalerate oxidoreductase subunit VorA (394 aa).

As to quaternary structure, heterotetramer of one alpha, one beta, one delta and one gamma chain.

It carries out the reaction 3-methyl-2-oxobutanoate + 2 oxidized [2Fe-2S]-[ferredoxin] + CoA = 2-methylpropanoyl-CoA + 2 reduced [2Fe-2S]-[ferredoxin] + CO2 + H(+). In Pyrococcus furiosus (strain ATCC 43587 / DSM 3638 / JCM 8422 / Vc1), this protein is Ketoisovalerate oxidoreductase subunit VorA (vorA).